A 306-amino-acid chain; its full sequence is Methionyl-tRNA formyltransferase (306 aa).

108–111 (SLLP) is a (6S)-5,6,7,8-tetrahydrofolate binding site.

Belongs to the Fmt family.

It catalyses the reaction L-methionyl-tRNA(fMet) + (6R)-10-formyltetrahydrofolate = N-formyl-L-methionyl-tRNA(fMet) + (6S)-5,6,7,8-tetrahydrofolate + H(+). Its function is as follows. Attaches a formyl group to the free amino group of methionyl-tRNA(fMet). The formyl group appears to play a dual role in the initiator identity of N-formylmethionyl-tRNA by promoting its recognition by IF2 and preventing the misappropriation of this tRNA by the elongation apparatus. In Paenarthrobacter aurescens (strain TC1), this protein is Methionyl-tRNA formyltransferase.